Reading from the N-terminus, the 208-residue chain is Urease accessory protein UreG 1 (208 aa).

Residue 14–21 participates in GTP binding; the sequence is GPVGSGKT.

The protein belongs to the SIMIBI class G3E GTPase family. UreG subfamily. As to quaternary structure, homodimer. UreD, UreF and UreG form a complex that acts as a GTP-hydrolysis-dependent molecular chaperone, activating the urease apoprotein by helping to assemble the nickel containing metallocenter of UreC. The UreE protein probably delivers the nickel.

The protein localises to the cytoplasm. Functionally, facilitates the functional incorporation of the urease nickel metallocenter. This process requires GTP hydrolysis, probably effectuated by UreG. This Brucella ovis (strain ATCC 25840 / 63/290 / NCTC 10512) protein is Urease accessory protein UreG 1.